The sequence spans 678 residues: DNA ligase (678 aa).

NAD(+) contacts are provided by residues 47 to 51, 96 to 97, and Glu122; these read DSDYD and SL. Catalysis depends on Lys124, which acts as the N6-AMP-lysine intermediate. NAD(+)-binding residues include Arg145, Glu182, Lys300, and Lys324. 4 residues coordinate Zn(2+): Cys418, Cys421, Cys436, and Cys442. Residues 602–678 enclose the BRCT domain; sequence AYNESFTGKT…ILEDNLKDLL (77 aa).

Belongs to the NAD-dependent DNA ligase family. LigA subfamily. The cofactor is Mg(2+). Requires Mn(2+) as cofactor.

It carries out the reaction NAD(+) + (deoxyribonucleotide)n-3'-hydroxyl + 5'-phospho-(deoxyribonucleotide)m = (deoxyribonucleotide)n+m + AMP + beta-nicotinamide D-nucleotide.. Functionally, DNA ligase that catalyzes the formation of phosphodiester linkages between 5'-phosphoryl and 3'-hydroxyl groups in double-stranded DNA using NAD as a coenzyme and as the energy source for the reaction. It is essential for DNA replication and repair of damaged DNA. This Francisella tularensis subsp. novicida (strain U112) protein is DNA ligase.